The sequence spans 245 residues: Zinc import ATP-binding protein ZnuC (245 aa).

The ABC transporter domain maps to 27–244; the sequence is LTADSLTLFY…AKFLSVFPNN (218 aa). 59–66 provides a ligand contact to ATP; the sequence is GPNGGGKT.

It belongs to the ABC transporter superfamily. Zinc importer (TC 3.A.1.15.5) family. As to quaternary structure, the complex is composed of two ATP-binding proteins (ZnuC), two transmembrane proteins (ZnuB) and a solute-binding protein (ZnuA).

It is found in the cell inner membrane. It carries out the reaction Zn(2+)(out) + ATP(in) + H2O(in) = Zn(2+)(in) + ADP(in) + phosphate(in) + H(+)(in). Functionally, part of the ABC transporter complex ZnuABC involved in zinc import. Responsible for energy coupling to the transport system. The polypeptide is Zinc import ATP-binding protein ZnuC (Anaplasma marginale (strain St. Maries)).